The following is a 201-amino-acid chain: Adenylyl-sulfate kinase (201 aa).

35–42 (GLSGSGKS) contributes to the ATP binding site. Ser109 acts as the Phosphoserine intermediate in catalysis.

The protein belongs to the APS kinase family.

The enzyme catalyses adenosine 5'-phosphosulfate + ATP = 3'-phosphoadenylyl sulfate + ADP + H(+). The protein operates within sulfur metabolism; hydrogen sulfide biosynthesis; sulfite from sulfate: step 2/3. Functionally, catalyzes the synthesis of activated sulfate. The chain is Adenylyl-sulfate kinase from Salmonella paratyphi C (strain RKS4594).